Reading from the N-terminus, the 291-residue chain is Porphobilinogen deaminase (291 aa).

Cys-237 carries the post-translational modification S-(dipyrrolylmethanemethyl)cysteine.

This sequence belongs to the HMBS family. Monomer. Requires dipyrromethane as cofactor.

It catalyses the reaction 4 porphobilinogen + H2O = hydroxymethylbilane + 4 NH4(+). It participates in porphyrin-containing compound metabolism; protoporphyrin-IX biosynthesis; coproporphyrinogen-III from 5-aminolevulinate: step 2/4. In terms of biological role, tetrapolymerization of the monopyrrole PBG into the hydroxymethylbilane pre-uroporphyrinogen in several discrete steps. This is Porphobilinogen deaminase from Clostridium perfringens (strain 13 / Type A).